We begin with the raw amino-acid sequence, 78 residues long: Large ribosomal subunit protein bL28 (78 aa).

This sequence belongs to the bacterial ribosomal protein bL28 family.

In Trichormus variabilis (strain ATCC 29413 / PCC 7937) (Anabaena variabilis), this protein is Large ribosomal subunit protein bL28.